The sequence spans 656 residues: Macrolide export ATP-binding/permease protein MacB (656 aa).

The ABC transporter domain occupies 6 to 244 (LEVSACYRSF…VKAQVDMSLA (239 aa)). An ATP-binding site is contributed by 42–49 (GASGSGKS). The next 4 helical transmembrane spans lie at 277–297 (FLTM…VALG), 531–551 (LLIS…VMNI), 586–606 (LVCL…GVVF), and 621–641 (SIVA…FLPA).

This sequence belongs to the ABC transporter superfamily. Macrolide exporter (TC 3.A.1.122) family. In terms of assembly, homodimer. Part of the tripartite efflux system MacAB-TolC, which is composed of an inner membrane transporter, MacB, a periplasmic membrane fusion protein, MacA, and an outer membrane component, TolC. The complex forms a large protein conduit and can translocate molecules across both the inner and outer membranes. Interacts with MacA.

It is found in the cell inner membrane. Its function is as follows. Part of the tripartite efflux system MacAB-TolC. MacB is a non-canonical ABC transporter that contains transmembrane domains (TMD), which form a pore in the inner membrane, and an ATP-binding domain (NBD), which is responsible for energy generation. Confers resistance against macrolides. The protein is Macrolide export ATP-binding/permease protein MacB of Shewanella oneidensis (strain ATCC 700550 / JCM 31522 / CIP 106686 / LMG 19005 / NCIMB 14063 / MR-1).